Here is a 383-residue protein sequence, read N- to C-terminus: Envelope glycoprotein D (383 aa).

The N-terminal stretch at Met1 to Ala30 is a signal peptide. Residues Ala31–Pro358 are Virion surface-facing. Cystine bridges form between Cys76–Cys197, Cys115–Cys212, and Cys127–Cys136. A profusion region spans residues Tyr244–Glu311. Residues Glu315–Pro349 form a disordered region. Positions Tyr323–Gly332 are enriched in pro residues. Residues Gly359–Ile379 form a helical membrane-spanning segment. Residues Arg380–Cys383 are Intravirion-facing.

It belongs to the herpesviridae glycoprotein D family.

The protein localises to the virion membrane. Functionally, envelope glycoprotein that binds to host cell entry receptors, promoting the virus entry into host cells. May trigger fusion with host membrane, by recruiting the fusion machinery composed of gB and gH/gL. This chain is Envelope glycoprotein D (US6), found in Amazona oratrix (yellow-headed parrot).